We begin with the raw amino-acid sequence, 388 residues long: S-adenosylmethionine synthase (388 aa).

H17 provides a ligand contact to ATP. D19 provides a ligand contact to Mg(2+). E45 lines the K(+) pocket. 2 residues coordinate L-methionine: E58 and Q102. Positions 102-112 (QSADIAQGVDA) are flexible loop. Residues 167-169 (DSK), 232-233 (RF), D241, 247-248 (RK), A264, and K268 contribute to the ATP site. D241 contributes to the L-methionine binding site. Residue K272 coordinates L-methionine.

It belongs to the AdoMet synthase family. As to quaternary structure, homotetramer; dimer of dimers. The cofactor is Mg(2+). K(+) serves as cofactor.

Its subcellular location is the cytoplasm. It carries out the reaction L-methionine + ATP + H2O = S-adenosyl-L-methionine + phosphate + diphosphate. It participates in amino-acid biosynthesis; S-adenosyl-L-methionine biosynthesis; S-adenosyl-L-methionine from L-methionine: step 1/1. Functionally, catalyzes the formation of S-adenosylmethionine (AdoMet) from methionine and ATP. The overall synthetic reaction is composed of two sequential steps, AdoMet formation and the subsequent tripolyphosphate hydrolysis which occurs prior to release of AdoMet from the enzyme. This chain is S-adenosylmethionine synthase, found in Paramagnetospirillum magneticum (strain ATCC 700264 / AMB-1) (Magnetospirillum magneticum).